The primary structure comprises 625 residues: Chaperone protein HtpG (625 aa).

The tract at residues 1 to 332 is a; substrate-binding; that stretch reads MSNKQNTAVQ…TEDLSLNVSR (332 aa). The tract at residues 333–545 is b; the sequence is EIVQSSPVMS…KDAMDSQMER (213 aa). Residues 546–625 are c; sequence MMKMMQQEMP…ELIEAATLSR (80 aa).

The protein belongs to the heat shock protein 90 family. Homodimer.

The protein resides in the cytoplasm. Molecular chaperone. Has ATPase activity. This Chlorobium luteolum (strain DSM 273 / BCRC 81028 / 2530) (Pelodictyon luteolum) protein is Chaperone protein HtpG.